A 167-amino-acid polypeptide reads, in one-letter code: Putative ripening-related protein 6 (167 aa).

A signal peptide spans 1-23 (MANAKQLALFAMLVLLLASCAAA). Positions 28-57 (KPDPCDGGGGGVDSHLPPGMRRCSSPAVSE) are disordered.

The protein belongs to the kiwellin family.

It localises to the secreted. The protein is Putative ripening-related protein 6 of Oryza sativa subsp. japonica (Rice).